The chain runs to 309 residues: Succinate dehydrogenase [ubiquinone] iron-sulfur subunit 3, mitochondrial (309 aa).

A mitochondrion-targeting transit peptide spans 1–22 (MSSVLRLLGRRICNPAAEKVRL). One can recognise a 2Fe-2S ferredoxin-type domain in the interval 69 to 160 (FKIYRWNPDK…PTIITPLPHM (92 aa)). 3 residues coordinate [2Fe-2S] cluster: C120, C125, and C140. Residues 202–232 (DRKKLDGLYECILCACCTTSCPSYWWNPEEF) enclose the 4Fe-4S ferredoxin-type domain. 3 residues coordinate [4Fe-4S] cluster: C212, C215, and C218. Residue C222 participates in [3Fe-4S] cluster binding. Position 227 (W227) interacts with a ubiquinone. Residues C270 and C276 each contribute to the [3Fe-4S] cluster site. Residue C280 coordinates [4Fe-4S] cluster.

This sequence belongs to the succinate dehydrogenase/fumarate reductase iron-sulfur protein family. As to quaternary structure, component of complex II composed of eight subunits in plants: four classical SDH subunits SDH1, SDH2, SDH3 and SDH4 (a flavoprotein (FP), an iron-sulfur protein (IP), and a cytochrome b composed of a large and a small subunit.), as well as four subunits unknown in mitochondria from bacteria and heterotrophic eukaryotes. It depends on [2Fe-2S] cluster as a cofactor. Requires [3Fe-4S] cluster as cofactor. [4Fe-4S] cluster is required as a cofactor.

It localises to the mitochondrion inner membrane. It catalyses the reaction a quinone + succinate = fumarate + a quinol. It participates in carbohydrate metabolism; tricarboxylic acid cycle; fumarate from succinate (eukaryal route): step 1/1. In terms of biological role, iron-sulfur protein (IP) subunit of succinate dehydrogenase (SDH) that is involved in complex II of the mitochondrial electron transport chain and is responsible for transferring electrons from succinate to ubiquinone (coenzyme Q). In Arabidopsis thaliana (Mouse-ear cress), this protein is Succinate dehydrogenase [ubiquinone] iron-sulfur subunit 3, mitochondrial (SDH2-3).